A 574-amino-acid chain; its full sequence is 2-succinyl-5-enolpyruvyl-6-hydroxy-3-cyclohexene-1-carboxylate synthase (574 aa).

This sequence belongs to the TPP enzyme family. MenD subfamily. Homodimer. The cofactor is Mg(2+). Mn(2+) is required as a cofactor. It depends on thiamine diphosphate as a cofactor.

It catalyses the reaction isochorismate + 2-oxoglutarate + H(+) = 5-enolpyruvoyl-6-hydroxy-2-succinyl-cyclohex-3-ene-1-carboxylate + CO2. Its pathway is quinol/quinone metabolism; 1,4-dihydroxy-2-naphthoate biosynthesis; 1,4-dihydroxy-2-naphthoate from chorismate: step 2/7. It functions in the pathway cofactor biosynthesis; phylloquinone biosynthesis. Its function is as follows. Catalyzes the thiamine diphosphate-dependent decarboxylation of 2-oxoglutarate and the subsequent addition of the resulting succinic semialdehyde-thiamine pyrophosphate anion to isochorismate to yield 2-succinyl-5-enolpyruvyl-6-hydroxy-3-cyclohexene-1-carboxylate (SEPHCHC). This Synechococcus sp. (strain RCC307) protein is 2-succinyl-5-enolpyruvyl-6-hydroxy-3-cyclohexene-1-carboxylate synthase.